The chain runs to 102 residues: ATP synthase subunit c (102 aa).

Helical transmembrane passes span 34–54 (IGAGVTMIAGSTVGIGQGYIF) and 80–100 (AVSESTAIYGLLISFILIFVA).

It belongs to the ATPase C chain family. In terms of assembly, F-type ATPases have 2 components, F(1) - the catalytic core - and F(0) - the membrane proton channel. F(1) has five subunits: alpha(3), beta(3), gamma(1), delta(1), epsilon(1). F(0) has three main subunits: a(1), b(2) and c(10-14). The alpha and beta chains form an alternating ring which encloses part of the gamma chain. F(1) is attached to F(0) by a central stalk formed by the gamma and epsilon chains, while a peripheral stalk is formed by the delta and b chains.

The protein localises to the cell membrane. Its function is as follows. F(1)F(0) ATP synthase produces ATP from ADP in the presence of a proton or sodium gradient. F-type ATPases consist of two structural domains, F(1) containing the extramembraneous catalytic core and F(0) containing the membrane proton channel, linked together by a central stalk and a peripheral stalk. During catalysis, ATP synthesis in the catalytic domain of F(1) is coupled via a rotary mechanism of the central stalk subunits to proton translocation. Key component of the F(0) channel; it plays a direct role in translocation across the membrane. A homomeric c-ring of between 10-14 subunits forms the central stalk rotor element with the F(1) delta and epsilon subunits. This is ATP synthase subunit c from Mycoplasma genitalium (strain ATCC 33530 / DSM 19775 / NCTC 10195 / G37) (Mycoplasmoides genitalium).